The chain runs to 577 residues: Arginine--tRNA ligase (577 aa).

Positions Pro122 to His132 match the 'HIGH' region motif.

It belongs to the class-I aminoacyl-tRNA synthetase family. In terms of assembly, monomer.

Its subcellular location is the cytoplasm. It catalyses the reaction tRNA(Arg) + L-arginine + ATP = L-arginyl-tRNA(Arg) + AMP + diphosphate. The chain is Arginine--tRNA ligase from Salmonella agona (strain SL483).